We begin with the raw amino-acid sequence, 144 residues long: Large ribosomal subunit protein uL15 (144 aa).

The segment at 1–48 (MIKLECLQDPSPRKRRTKLLGRGPSSGHGKTSGRGHKGDGSRSGYKRR) is disordered.

This sequence belongs to the universal ribosomal protein uL15 family. In terms of assembly, part of the 50S ribosomal subunit.

Its function is as follows. Binds to the 23S rRNA. This chain is Large ribosomal subunit protein uL15, found in Chlamydia trachomatis serovar L2 (strain ATCC VR-902B / DSM 19102 / 434/Bu).